A 305-amino-acid chain; its full sequence is Mas-related G-protein coupled receptor member A8 (305 aa).

The Extracellular portion of the chain corresponds to 1 to 17 (MDKTILGSIDIETLIRH). Residues 18-38 (LMIIIFGLVGLTGNAIVFWLL) traverse the membrane as a helical segment. Topologically, residues 39–46 (GFHLHRNA) are cytoplasmic. A helical membrane pass occupies residues 47–67 (FLVYILNLALADFFYLLCHII). Topologically, residues 68-85 (NSIMFLLKVPSPNIILDH) are extracellular. Residues 86 to 106 (CFYTIMIVLYITGLSMLSAIS) form a helical membrane-spanning segment. Residues 107–129 (TERCLSVLCPIWYRCHRPEHTST) lie on the Cytoplasmic side of the membrane. A helical transmembrane segment spans residues 130-150 (AMCAVIWVMSLLISILNGYFC). N-linked (GlcNAc...) asparagine glycosylation is found at Asn-151 and Asn-159. The Extracellular portion of the chain corresponds to 151-172 (NFSSPKYVNNSVCQASDIFIRT). The chain crosses the membrane as a helical span at residues 173 to 193 (YPIFLFVLLCLSTLALLARLF). Topologically, residues 194 to 207 (SGAGKRKFTRLFVT) are cytoplasmic. The chain crosses the membrane as a helical span at residues 208 to 228 (IMLAILVFLLCGLPLGFFWFL). The Extracellular segment spans residues 229 to 243 (SPWIEDRFIVLDYRL). A helical membrane pass occupies residues 244–264 (FFASVVLTVVNSCANPIIYFF). The Cytoplasmic segment spans residues 265 to 305 (VGSFRHRLKQQTLKMFLQRALQDTPETPENMVEMSRSKAEP).

The protein belongs to the G-protein coupled receptor 1 family. Mas subfamily. As to expression, expressed in a subset of sensory neurons that includes nociceptors. Expressed in the subclass of non-peptidergic sensory neurons that are IB4(+) and VR1(-).

It is found in the cell membrane. In terms of biological role, orphan receptor. May be a receptor for RFamide-family neuropeptides such as NPFF and NPAF, which are analgesic in vivo. May regulate nociceptor function and/or development, including the sensation or modulation of pain. This is Mas-related G-protein coupled receptor member A8 (Mrgpra8) from Mus musculus (Mouse).